A 360-amino-acid chain; its full sequence is Peptide chain release factor 1 (360 aa).

The residue at position 237 (Gln-237) is an N5-methylglutamine.

This sequence belongs to the prokaryotic/mitochondrial release factor family. In terms of processing, methylated by PrmC. Methylation increases the termination efficiency of RF1.

The protein resides in the cytoplasm. Peptide chain release factor 1 directs the termination of translation in response to the peptide chain termination codons UAG and UAA. The polypeptide is Peptide chain release factor 1 (Pseudomonas fluorescens (strain ATCC BAA-477 / NRRL B-23932 / Pf-5)).